Here is a 179-residue protein sequence, read N- to C-terminus: MYEFLDRRYALALYEVGEKNQKLEEYINDFGEIVHLLKNDENINQVVNHPQISTSEKKKIFMEIFKGKIDEKLLNFLLLLLEKKRIHDAEGILTQLNKISLEKHNKVVAEVRTVIPLTDNEKTTLASKLSAKYNKIIIFKEIIDKTIIGGVYVRVGDDVIDGTIKFKLESMKKVMLKEE.

The protein belongs to the ATPase delta chain family. In terms of assembly, F-type ATPases have 2 components, F(1) - the catalytic core - and F(0) - the membrane proton channel. F(1) has five subunits: alpha(3), beta(3), gamma(1), delta(1), epsilon(1). F(0) has three main subunits: a(1), b(2) and c(10-14). The alpha and beta chains form an alternating ring which encloses part of the gamma chain. F(1) is attached to F(0) by a central stalk formed by the gamma and epsilon chains, while a peripheral stalk is formed by the delta and b chains.

It localises to the cell membrane. In terms of biological role, f(1)F(0) ATP synthase produces ATP from ADP in the presence of a proton or sodium gradient. F-type ATPases consist of two structural domains, F(1) containing the extramembraneous catalytic core and F(0) containing the membrane proton channel, linked together by a central stalk and a peripheral stalk. During catalysis, ATP synthesis in the catalytic domain of F(1) is coupled via a rotary mechanism of the central stalk subunits to proton translocation. This protein is part of the stalk that links CF(0) to CF(1). It either transmits conformational changes from CF(0) to CF(1) or is implicated in proton conduction. The sequence is that of ATP synthase subunit delta from Clostridium acetobutylicum (strain ATCC 824 / DSM 792 / JCM 1419 / IAM 19013 / LMG 5710 / NBRC 13948 / NRRL B-527 / VKM B-1787 / 2291 / W).